The chain runs to 597 residues: Dictomallein-3 (597 aa).

The signal sequence occupies residues 1–19; sequence MKLILILIFLFSCILFINC. The Peptidase M66 domain maps to 148-409; that stretch reads PDVGQDYTLK…QNYFKNSIYY (262 aa). Residue H301 participates in Zn(2+) binding. Residue E302 is part of the active site. Zn(2+)-binding residues include H305 and H311.

This sequence belongs to the dictomallein family. Zn(2+) serves as cofactor.

The protein resides in the secreted. This chain is Dictomallein-3 (dtmlC), found in Dictyostelium discoideum (Social amoeba).